The chain runs to 76 residues: Putative Fe(2+) transport protein A (76 aa).

This sequence belongs to the FeoA family.

Functionally, might be involved in Fe(2+) ion uptake. This chain is Putative Fe(2+) transport protein A, found in Helicobacter pylori (strain ATCC 700392 / 26695) (Campylobacter pylori).